The primary structure comprises 359 residues: Aminomethyltransferase (359 aa).

It belongs to the GcvT family. As to quaternary structure, the glycine cleavage system is composed of four proteins: P, T, L and H.

It carries out the reaction N(6)-[(R)-S(8)-aminomethyldihydrolipoyl]-L-lysyl-[protein] + (6S)-5,6,7,8-tetrahydrofolate = N(6)-[(R)-dihydrolipoyl]-L-lysyl-[protein] + (6R)-5,10-methylene-5,6,7,8-tetrahydrofolate + NH4(+). Functionally, the glycine cleavage system catalyzes the degradation of glycine. This chain is Aminomethyltransferase, found in Alcanivorax borkumensis (strain ATCC 700651 / DSM 11573 / NCIMB 13689 / SK2).